The primary structure comprises 473 residues: Flavin-dependent L-tryptophan oxidase RebO (473 aa).

The signal sequence occupies residues 1–21; that stretch reads MSRGHKKITVLGAGVAGLVAA. FAD-binding positions include 15–16, 35–36, Arg43, 61–64, Glu444, and 451–456; these read VA, EG, GAMR, and AWIDGA.

This sequence belongs to the flavin monoamine oxidase family. RebO subfamily. In terms of assembly, homodimer. FAD serves as cofactor.

The catalysed reaction is 7-chloro-L-tryptophan + O2 = 3-(7-chloroindol-3-yl)-2-iminopropanoate + H2O2. It catalyses the reaction L-tryptophan + O2 = 2-iminio-3-(indol-3-yl)propanoate + H2O2. Involved in the biosynthesis of the indolocarbazole antitumor agent rebeccamycin. It generates the imine form of 7-chloroindole 3-pyruvate (7Cl-IPA) from 7-chloro-L-tryptophan (7Cl-Trp), with concomitant two-electron reduction of O(2) to H(2)O(2). The enzyme is also active with L-tryptophan as substrate. The sequence is that of Flavin-dependent L-tryptophan oxidase RebO (rebO) from Lentzea aerocolonigenes (Lechevalieria aerocolonigenes).